The sequence spans 186 residues: Ribosome-recycling factor (186 aa).

The protein belongs to the RRF family.

It is found in the cytoplasm. Its function is as follows. Responsible for the release of ribosomes from messenger RNA at the termination of protein biosynthesis. May increase the efficiency of translation by recycling ribosomes from one round of translation to another. The chain is Ribosome-recycling factor from Burkholderia thailandensis (strain ATCC 700388 / DSM 13276 / CCUG 48851 / CIP 106301 / E264).